The sequence spans 318 residues: NAD kinase (318 aa).

D80 functions as the Proton acceptor in the catalytic mechanism. NAD(+) is bound by residues 80 to 81, R85, 155 to 156, D185, and 196 to 201; these read DG, NE, and TAYAFS.

This sequence belongs to the NAD kinase family. Requires a divalent metal cation as cofactor.

Its subcellular location is the cytoplasm. It catalyses the reaction NAD(+) + ATP = ADP + NADP(+) + H(+). In terms of biological role, involved in the regulation of the intracellular balance of NAD and NADP, and is a key enzyme in the biosynthesis of NADP. Catalyzes specifically the phosphorylation on 2'-hydroxyl of the adenosine moiety of NAD to yield NADP. The chain is NAD kinase from Corynebacterium efficiens (strain DSM 44549 / YS-314 / AJ 12310 / JCM 11189 / NBRC 100395).